The sequence spans 338 residues: MLISQRPTLTEEYVDSARSRFVIEPLEPGFGYTLGNSLRRTLLSSIPGAAVTSIKIDGVLHEFTTINGVKEDVSDIILNIKGLVLSSDSDEPVVMYLRKEGAGVITAGDIEPPAGVEIHNPDLHLATLNEQGRLDIEMIVERGRGYVPATLYSGPAEIGRIPVDQIYSPVLKVSYKVEATRVEQRTDFDKLIIDVETKNSMAPRDALASAGKTLVELFGLARELNTAAEGIEIGPSPQETEYIAAYGMPIEDLNFSVRSYNCLKRQEIHTVGELAECTESDLLDIRNFGQKSINEVKIKLAGLGLTLKDAPEDFDPTQLDGYDAATGDYIDTDPEETE.

Positions 1–225 (MLISQRPTLT…ELFGLARELN (225 aa)) are alpha N-terminal domain (alpha-NTD). Residues 242 to 338 (YIAAYGMPIE…YIDTDPEETE (97 aa)) are alpha C-terminal domain (alpha-CTD). The segment at 314–338 (FDPTQLDGYDAATGDYIDTDPEETE) is disordered.

This sequence belongs to the RNA polymerase alpha chain family. Homodimer. The RNAP catalytic core consists of 2 alpha, 1 beta, 1 beta' and 1 omega subunit. When a sigma factor is associated with the core the holoenzyme is formed, which can initiate transcription.

It carries out the reaction RNA(n) + a ribonucleoside 5'-triphosphate = RNA(n+1) + diphosphate. DNA-dependent RNA polymerase catalyzes the transcription of DNA into RNA using the four ribonucleoside triphosphates as substrates. The sequence is that of DNA-directed RNA polymerase subunit alpha from Corynebacterium diphtheriae (strain ATCC 700971 / NCTC 13129 / Biotype gravis).